The primary structure comprises 192 residues: MCSVARHMESIMLFTLLGLCVGLAAGTEAAVVKDFDVNKFLGFWYEIALASKMGAYGLAHKEEKMGAMVVELKENLLALTTTYYNEGHCVLEKVAATQVDGSAKYKVTRISGEKEVVVVATDYMTYTVIDITSLVAGAVHRAMKLYSRSLDNNGEALNNFQKIALKHGFSETDIHILKHDLTCVNALQSGQI.

The first 26 residues, 1–26, serve as a signal peptide directing secretion; that stretch reads MCSVARHMESIMLFTLLGLCVGLAAG. An intrachain disulfide couples Cys89 to Cys183.

The protein belongs to the calycin superfamily. Lipocalin family. Post-translationally, 2 different forms with differently processed N-termini exist. As to expression, epididymal fluid of the caudal and corpus regions (at protein level).

It localises to the secreted. In terms of biological role, associates with spermatozoa in the epididymal fluid but does not bind tightly to them. Binds both all-trans and 13-cis retinoic acid. May act as a retinoid carrier protein which is required for epididymal function and/or sperm maturation. The sequence is that of Epididymal-specific lipocalin-5 from Mus musculus (Mouse).